A 119-amino-acid polypeptide reads, in one-letter code: Ribosome-binding factor A (119 aa).

This sequence belongs to the RbfA family. Monomer. Binds 30S ribosomal subunits, but not 50S ribosomal subunits or 70S ribosomes.

It localises to the cytoplasm. One of several proteins that assist in the late maturation steps of the functional core of the 30S ribosomal subunit. Associates with free 30S ribosomal subunits (but not with 30S subunits that are part of 70S ribosomes or polysomes). Required for efficient processing of 16S rRNA. May interact with the 5'-terminal helix region of 16S rRNA. This chain is Ribosome-binding factor A, found in Lactococcus lactis subsp. cremoris (strain SK11).